Here is a 945-residue protein sequence, read N- to C-terminus: Valine--tRNA ligase (945 aa).

The 'HIGH' region signature appears at 42-52 (PNVTGTLHMGH). The short motif at 552–556 (KMSKS) is the 'KMSKS' region element. Lys-555 lines the ATP pocket. Positions 879–945 (DKATETARLS…VQTQLSKLKD (67 aa)) form a coiled coil.

It belongs to the class-I aminoacyl-tRNA synthetase family. ValS type 1 subfamily. Monomer.

Its subcellular location is the cytoplasm. The enzyme catalyses tRNA(Val) + L-valine + ATP = L-valyl-tRNA(Val) + AMP + diphosphate. In terms of biological role, catalyzes the attachment of valine to tRNA(Val). As ValRS can inadvertently accommodate and process structurally similar amino acids such as threonine, to avoid such errors, it has a 'posttransfer' editing activity that hydrolyzes mischarged Thr-tRNA(Val) in a tRNA-dependent manner. The chain is Valine--tRNA ligase from Neisseria meningitidis serogroup A / serotype 4A (strain DSM 15465 / Z2491).